A 1393-amino-acid polypeptide reads, in one-letter code: DNA-directed RNA polymerase subunit beta (1393 aa).

This sequence belongs to the RNA polymerase beta chain family. The RNAP catalytic core consists of 2 alpha, 1 beta, 1 beta' and 1 omega subunit. When a sigma factor is associated with the core the holoenzyme is formed, which can initiate transcription.

It catalyses the reaction RNA(n) + a ribonucleoside 5'-triphosphate = RNA(n+1) + diphosphate. Its function is as follows. DNA-dependent RNA polymerase catalyzes the transcription of DNA into RNA using the four ribonucleoside triphosphates as substrates. This is DNA-directed RNA polymerase subunit beta from Rhodospirillum rubrum (strain ATCC 11170 / ATH 1.1.1 / DSM 467 / LMG 4362 / NCIMB 8255 / S1).